The chain runs to 225 residues: NAD(P)H-quinone oxidoreductase subunit K, chloroplastic (225 aa).

[4Fe-4S] cluster contacts are provided by Cys-43, Cys-44, Cys-108, and Cys-139.

The protein belongs to the complex I 20 kDa subunit family. NDH is composed of at least 16 different subunits, 5 of which are encoded in the nucleus. [4Fe-4S] cluster is required as a cofactor.

The protein localises to the plastid. It is found in the chloroplast thylakoid membrane. It carries out the reaction a plastoquinone + NADH + (n+1) H(+)(in) = a plastoquinol + NAD(+) + n H(+)(out). The enzyme catalyses a plastoquinone + NADPH + (n+1) H(+)(in) = a plastoquinol + NADP(+) + n H(+)(out). In terms of biological role, NDH shuttles electrons from NAD(P)H:plastoquinone, via FMN and iron-sulfur (Fe-S) centers, to quinones in the photosynthetic chain and possibly in a chloroplast respiratory chain. The immediate electron acceptor for the enzyme in this species is believed to be plastoquinone. Couples the redox reaction to proton translocation, and thus conserves the redox energy in a proton gradient. This is NAD(P)H-quinone oxidoreductase subunit K, chloroplastic from Populus alba (White poplar).